A 423-amino-acid polypeptide reads, in one-letter code: Glutamate-1-semialdehyde 2,1-aminomutase (423 aa).

At Lys263 the chain carries N6-(pyridoxal phosphate)lysine.

The protein belongs to the class-III pyridoxal-phosphate-dependent aminotransferase family. HemL subfamily. The cofactor is pyridoxal 5'-phosphate.

The protein resides in the cytoplasm. It carries out the reaction (S)-4-amino-5-oxopentanoate = 5-aminolevulinate. Its pathway is porphyrin-containing compound metabolism; protoporphyrin-IX biosynthesis; 5-aminolevulinate from L-glutamyl-tRNA(Glu): step 2/2. The polypeptide is Glutamate-1-semialdehyde 2,1-aminomutase (Ignicoccus hospitalis (strain KIN4/I / DSM 18386 / JCM 14125)).